Here is a 256-residue protein sequence, read N- to C-terminus: Leucyl/phenylalanyl-tRNA--protein transferase (256 aa).

Belongs to the L/F-transferase family.

It localises to the cytoplasm. It carries out the reaction N-terminal L-lysyl-[protein] + L-leucyl-tRNA(Leu) = N-terminal L-leucyl-L-lysyl-[protein] + tRNA(Leu) + H(+). The catalysed reaction is N-terminal L-arginyl-[protein] + L-leucyl-tRNA(Leu) = N-terminal L-leucyl-L-arginyl-[protein] + tRNA(Leu) + H(+). It catalyses the reaction L-phenylalanyl-tRNA(Phe) + an N-terminal L-alpha-aminoacyl-[protein] = an N-terminal L-phenylalanyl-L-alpha-aminoacyl-[protein] + tRNA(Phe). Functions in the N-end rule pathway of protein degradation where it conjugates Leu, Phe and, less efficiently, Met from aminoacyl-tRNAs to the N-termini of proteins containing an N-terminal arginine or lysine. This Hydrogenovibrio crunogenus (strain DSM 25203 / XCL-2) (Thiomicrospira crunogena) protein is Leucyl/phenylalanyl-tRNA--protein transferase.